The primary structure comprises 272 residues: Putative bark agglutinin LECRPA3 (272 aa).

Residues 1–29 (PFNPETVYALLAMLISFFVLLASARKENS) form the signal peptide. Residues N36, N39, and N65 are each glycosylated (N-linked (GlcNAc...) asparagine). Positions 150 and 152 each coordinate Mn(2+). D152, Y154, N156, and D159 together coordinate Ca(2+). Residues D159 and H164 each contribute to the Mn(2+) site.

It belongs to the leguminous lectin family. In terms of assembly, homotetramer. In terms of tissue distribution, weak expression in bark. The lectin accumulates in the inner bark in autumn.

Its function is as follows. Bark lectins are storage proteins that probably maintain stocks of nitrogen during dormant period. Self-aggregatable molecules that can bind their own carbohydrate side chains. They could also play a role in the plant's defense against phytophagous invertebrates or herbivorous higher animals. This chain is Putative bark agglutinin LECRPA3, found in Robinia pseudoacacia (Black locust).